The sequence spans 937 residues: AP-2 complex subunit beta (937 aa).

Thr2 carries the N-acetylthreonine modification. Ser4 carries the phosphoserine modification. Lys265 carries the post-translational modification N6-acetyllysine. Tyr737 and Tyr928 each carry phosphotyrosine.

This sequence belongs to the adaptor complexes large subunit family. As to quaternary structure, adapter protein complex 2 (AP-2) is a heterotetramer composed of two large adaptins (alpha-type subunit AP2A1 or AP2A2 and beta-type subunit AP2B1), a medium adaptin (mu-type subunit AP2M1) and a small adaptin (sigma-type subunit AP2S1). Interacts with EPN1. Interacts with EPS15; clathrin competes with EPS15. Interacts with SNAP91; clathrin competes with SNAP91. Interacts with CLTC; clathrin competes with EPS15, SNAP91 and PIP5K1C. Interacts with LDLRAP1. Interacts with AMPH and BIN1. Interacts with ARF6 (GDP-bound). Interacts (dephosphorylated at Tyr-737) with ARRB1; phosphorylation of AP2B1 at Tyr-737 disrupts the interaction. Interacts with SLC2A8. Interacts with SCYL1 and SCYL2. Interacts with TGFBR1 and TGFBR2. Interacts with PIP5K1C; clathrin competes with PIP5K1C. Interacts with DENND1B. Interacts with FCHO1. Interacts with RFTN1. Interacts with KIAA1107. Together with AP2A1 or AP2A2 and AP2M1, it interacts with ADAM10; this interaction facilitates ADAM10 endocytosis from the plasma membrane during long-term potentiation in hippocampal neurons. Post-translationally, the N-terminus is blocked. Phosphorylation at Tyr-737 by SRC occurs at the plasma membrane in clathrin-coated vesicles (CCVs).

Its subcellular location is the cell membrane. The protein resides in the membrane. It is found in the coated pit. In terms of biological role, component of the adaptor protein complex 2 (AP-2). Adaptor protein complexes function in protein transport via transport vesicles in different membrane traffic pathways. Adaptor protein complexes are vesicle coat components and appear to be involved in cargo selection and vesicle formation. AP-2 is involved in clathrin-dependent endocytosis in which cargo proteins are incorporated into vesicles surrounded by clathrin (clathrin-coated vesicles, CCVs) which are destined for fusion with the early endosome. The clathrin lattice serves as a mechanical scaffold but is itself unable to bind directly to membrane components. Clathrin-associated adaptor protein (AP) complexes which can bind directly to both the clathrin lattice and to the lipid and protein components of membranes are considered to be the major clathrin adaptors contributing the CCV formation. AP-2 also serves as a cargo receptor to selectively sort the membrane proteins involved in receptor-mediated endocytosis. AP-2 seems to play a role in the recycling of synaptic vesicle membranes from the presynaptic surface. AP-2 recognizes Y-X-X-[FILMV] (Y-X-X-Phi) and [ED]-X-X-X-L-[LI] endocytosis signal motifs within the cytosolic tails of transmembrane cargo molecules. AP-2 may also play a role in maintaining normal post-endocytic trafficking through the ARF6-regulated, non-clathrin pathway. During long-term potentiation in hippocampal neurons, AP-2 is responsible for the endocytosis of ADAM10. The AP-2 beta subunit acts via its C-terminal appendage domain as a scaffolding platform for endocytic accessory proteins; at least some clathrin-associated sorting proteins (CLASPs) are recognized by their [DE]-X(1,2)-F-X-X-[FL]-X-X-X-R motif. The AP-2 beta subunit binds to clathrin heavy chain, promoting clathrin lattice assembly; clathrin displaces at least some CLASPs from AP2B1 which probably then can be positioned for further coat assembly. The polypeptide is AP-2 complex subunit beta (AP2B1) (Bos taurus (Bovine)).